The primary structure comprises 290 residues: 33 kDa chaperonin (290 aa).

2 disulfide bridges follow: Cys231-Cys233 and Cys264-Cys267.

It belongs to the HSP33 family. Post-translationally, under oxidizing conditions two disulfide bonds are formed involving the reactive cysteines. Under reducing conditions zinc is bound to the reactive cysteines and the protein is inactive.

Its subcellular location is the cytoplasm. Functionally, redox regulated molecular chaperone. Protects both thermally unfolding and oxidatively damaged proteins from irreversible aggregation. Plays an important role in the bacterial defense system toward oxidative stress. The protein is 33 kDa chaperonin of Photorhabdus laumondii subsp. laumondii (strain DSM 15139 / CIP 105565 / TT01) (Photorhabdus luminescens subsp. laumondii).